The sequence spans 265 residues: tRNA pseudouridine synthase A (265 aa).

Asp-58 functions as the Nucleophile in the catalytic mechanism. Tyr-116 provides a ligand contact to substrate.

Belongs to the tRNA pseudouridine synthase TruA family. As to quaternary structure, homodimer.

It catalyses the reaction uridine(38/39/40) in tRNA = pseudouridine(38/39/40) in tRNA. Its function is as follows. Formation of pseudouridine at positions 38, 39 and 40 in the anticodon stem and loop of transfer RNAs. This Neisseria meningitidis serogroup C (strain 053442) protein is tRNA pseudouridine synthase A.